A 119-amino-acid polypeptide reads, in one-letter code: NADH-quinone oxidoreductase subunit A (119 aa).

Helical transmembrane passes span 9-29 (VLLF…LGYV), 63-83 (LVAI…PWAV), and 88-108 (VGMT…VGFA).

It belongs to the complex I subunit 3 family. As to quaternary structure, NDH-1 is composed of 14 different subunits. Subunits NuoA, H, J, K, L, M, N constitute the membrane sector of the complex.

The protein localises to the cell inner membrane. It catalyses the reaction a quinone + NADH + 5 H(+)(in) = a quinol + NAD(+) + 4 H(+)(out). Its function is as follows. NDH-1 shuttles electrons from NADH, via FMN and iron-sulfur (Fe-S) centers, to quinones in the respiratory chain. The immediate electron acceptor for the enzyme in this species is believed to be ubiquinone. Couples the redox reaction to proton translocation (for every two electrons transferred, four hydrogen ions are translocated across the cytoplasmic membrane), and thus conserves the redox energy in a proton gradient. The sequence is that of NADH-quinone oxidoreductase subunit A from Paracidovorax citrulli (strain AAC00-1) (Acidovorax citrulli).